Here is a 1225-residue protein sequence, read N- to C-terminus: NHS-like protein 2 (1225 aa).

Disordered stretches follow at residues 161–180 (TFRS…PQSA), 193–213 (QLSE…SLSL), 291–371 (NFSQ…ESMG), 466–510 (HMPE…TTDV), 543–632 (LSAQ…PEST), 670–766 (QGSS…KFPK), 812–1009 (KTNP…KKPS), 1042–1093 (DTKC…DKTA), and 1128–1203 (KEPG…KTTN). 2 stretches are compositionally biased toward polar residues: residues 291–315 (NFSQ…TSDI) and 339–350 (SLTSPVLRTPSS). Ser500 is subject to Phosphoserine. Over residues 552 to 568 (RRQRSKSISLRKAKKKP) the composition is skewed to basic residues. A Phosphoserine modification is found at Ser576. A compositionally biased stretch (low complexity) spans 675-688 (SLASPSTSRATTPS). A Phosphoserine modification is found at Ser691. 2 stretches are compositionally biased toward polar residues: residues 710-730 (SPSS…SMSL) and 812-827 (KTNP…TQSD). Over residues 841–851 (PEDDIESPEYA) the composition is skewed to acidic residues. A compositionally biased stretch (basic and acidic residues) spans 852-867 (EEPRAEEVFTLPERKT). Polar residues-rich tracts occupy residues 939–968 (GEST…QPPQ) and 1054–1065 (SLGQRVTSTPQA). A Phosphoserine modification is found at Ser1054. Positions 1082–1093 (TEEKSLISDKTA) are enriched in basic and acidic residues. Residues 1138–1155 (RTSSHSPIKNTAESPISE) are compositionally biased toward polar residues. A compositionally biased stretch (low complexity) spans 1156–1166 (STATAGSGSSA).

It belongs to the NHS family.

The polypeptide is NHS-like protein 2 (Homo sapiens (Human)).